A 388-amino-acid polypeptide reads, in one-letter code: NADH-quinone oxidoreductase subunit D 2 (388 aa).

Belongs to the complex I 49 kDa subunit family. In terms of assembly, NDH-1 is composed of 14 different subunits. Subunits NuoB, C, D, E, F, and G constitute the peripheral sector of the complex.

It localises to the cell inner membrane. It carries out the reaction a quinone + NADH + 5 H(+)(in) = a quinol + NAD(+) + 4 H(+)(out). In terms of biological role, NDH-1 shuttles electrons from NADH, via FMN and iron-sulfur (Fe-S) centers, to quinones in the respiratory chain. The immediate electron acceptor for the enzyme in this species is believed to be ubiquinone. Couples the redox reaction to proton translocation (for every two electrons transferred, four hydrogen ions are translocated across the cytoplasmic membrane), and thus conserves the redox energy in a proton gradient. This Sorangium cellulosum (strain So ce56) (Polyangium cellulosum (strain So ce56)) protein is NADH-quinone oxidoreductase subunit D 2.